The following is a 338-amino-acid chain: Structural protein VP9 (338 aa).

The protein localises to the virion. Plays an important role in virus transmission by the insect vector. May participate in the virus stability by binding clamp proteins and surrounding the pentameric turrets present in the virion. This is Structural protein VP9 from Rice ragged stunt virus (isolate Thailand) (RRSV).